The following is a 606-amino-acid chain: Aspartate--tRNA(Asp/Asn) ligase (606 aa).

Glu-177 contributes to the L-aspartate binding site. An aspartate region spans residues Gln-201 to Lys-204. L-aspartate is bound at residue Arg-223. ATP-binding positions include Arg-223–Glu-225 and Gln-232. Residue His-461 coordinates L-aspartate. Glu-499 contributes to the ATP binding site. Arg-506 serves as a coordination point for L-aspartate. Gly-551–Arg-554 contacts ATP.

This sequence belongs to the class-II aminoacyl-tRNA synthetase family. Type 1 subfamily. In terms of assembly, homodimer.

The protein resides in the cytoplasm. The enzyme catalyses tRNA(Asx) + L-aspartate + ATP = L-aspartyl-tRNA(Asx) + AMP + diphosphate. In terms of biological role, aspartyl-tRNA synthetase with relaxed tRNA specificity since it is able to aspartylate not only its cognate tRNA(Asp) but also tRNA(Asn). Reaction proceeds in two steps: L-aspartate is first activated by ATP to form Asp-AMP and then transferred to the acceptor end of tRNA(Asp/Asn). The chain is Aspartate--tRNA(Asp/Asn) ligase from Prochlorococcus marinus (strain MIT 9303).